A 523-amino-acid polypeptide reads, in one-letter code: GMP synthase [glutamine-hydrolyzing] (523 aa).

A Glutamine amidotransferase type-1 domain is found at 9–198 (PVLVVDFGAQ…LTEIAGLEQN (190 aa)). Cys-86 (nucleophile) is an active-site residue. Active-site residues include His-172 and Glu-174. One can recognise a GMPS ATP-PPase domain in the interval 199 to 397 (WTAANIAEEL…LGLPEEIVGR (199 aa)). Position 227–233 (227–233 (SGGVDSA)) interacts with ATP.

As to quaternary structure, homodimer.

The catalysed reaction is XMP + L-glutamine + ATP + H2O = GMP + L-glutamate + AMP + diphosphate + 2 H(+). It functions in the pathway purine metabolism; GMP biosynthesis; GMP from XMP (L-Gln route): step 1/1. Its function is as follows. Catalyzes the synthesis of GMP from XMP. This is GMP synthase [glutamine-hydrolyzing] from Corynebacterium glutamicum (strain R).